Consider the following 194-residue polypeptide: Mersacidin decarboxylase (194 aa).

H75 is a catalytic residue.

It belongs to the HFCD (homooligomeric flavin containing Cys decarboxylase) superfamily. Homododecamer. FAD is required as a cofactor.

Its pathway is antibiotic biosynthesis; mersacidin biosynthesis. Functionally, catalyzes the oxidative decarboxylation of the C-terminal cysteine residue of mersacidin to an aminoenethiol residue. The protein is Mersacidin decarboxylase (mrsD) of Bacillus sp. (strain HIL-Y85/54728).